A 190-amino-acid chain; its full sequence is uncharacterized protein (190 aa).

This sequence to Synechocystis PCC 6803 sll1609 and slr1290.

This is an uncharacterized protein from Synechocystis sp. (strain ATCC 27184 / PCC 6803 / Kazusa).